A 583-amino-acid chain; its full sequence is Inactive carboxylesterase-like protein VdtD (583 aa).

The signal sequence occupies residues 1–23; it reads MFMTQIVFGIAPTLLKTFSHLTA. Residues N84, N109, N221, N265, N307, N350, N388, N448, and N468 are each glycosylated (N-linked (GlcNAc...) asparagine).

The protein belongs to the type-B carboxylesterase/lipase family.

Its pathway is secondary metabolite biosynthesis. Inactive carboxylesterase-like protein; part of the gene cluster that mediates the biosynthesis of viriditoxin, one of the 'classical' secondary metabolites produced by fungi and that has antibacterial activity. The first step is performed by the polyketide synthase VdtA which condenses one acetyl-CoA and 6 malonyl-CoA units to form the heptaketide monomer backbone of viriditoxin. The product of VdtA is then O-methylated on C7 by the O-methyltransferase VdtC. The O-methyl group is important for the stereoselective coupling of the monomers at the final step of viriditoxin biosynthesis. The short-chain dehydrogenase/reductase VdtF then acts as a stereospecific reductase converting the pyrone to dihydropyrone via the reduction of the C3-C4 double bond. The FAD-binding monooxygenase VdtE then converts the ketone group into a methyl-ester group to yield semi-viriditoxin. Finally, the laccase VdtB is involved in dimerization of 2 semi-viriditoxin molecules to yield the final viriditoxin. VdtB is responsible for the regioselective 6,6'-coupling of semi-viriditoxin, which yields (M)-viriditoxin and (P)-viriditoxin at a ratio of 1:2. The non-catalytic carboxylesterase-like protein VdtD affects the stereochemistical outcome of the coupling. The highly reducing polyketide synthase VdtX is not involved in viriditoxin synthesis, but might possibly play a role in the production of additional metabolites not identified yet. The polypeptide is Inactive carboxylesterase-like protein VdtD (Byssochlamys spectabilis (Paecilomyces variotii)).